The primary structure comprises 155 residues: Regulatory protein RecX (155 aa).

This sequence belongs to the RecX family.

The protein localises to the cytoplasm. Modulates RecA activity. This Pseudomonas fluorescens (strain ATCC BAA-477 / NRRL B-23932 / Pf-5) protein is Regulatory protein RecX.